We begin with the raw amino-acid sequence, 338 residues long: D-alanine--D-alanine ligase (338 aa).

Positions 120–324 (KRVMLAEGLP…YEDLCIEVLK (205 aa)) constitute an ATP-grasp domain. 150–205 (PDKLGLPLIVKPAREGSSIGLTKVTERAGMADAVAQAEKLDADILCEQFISGDEVT) is an ATP binding site. The Mg(2+) site is built by Asp-277, Glu-291, and Asn-293.

Belongs to the D-alanine--D-alanine ligase family. Requires Mg(2+) as cofactor. It depends on Mn(2+) as a cofactor.

It localises to the cytoplasm. It carries out the reaction 2 D-alanine + ATP = D-alanyl-D-alanine + ADP + phosphate + H(+). Its pathway is cell wall biogenesis; peptidoglycan biosynthesis. Its function is as follows. Cell wall formation. In Polaromonas sp. (strain JS666 / ATCC BAA-500), this protein is D-alanine--D-alanine ligase.